Reading from the N-terminus, the 456-residue chain is uncharacterized protein (456 aa).

Positions 415–428 (SNSNGSSSSGNSSS) are enriched in low complexity. Residues 415–444 (SNSNGSSSSGNSSSIYNSHLMNDKKKNNNA) are disordered.

This is an uncharacterized protein from Saccharomyces cerevisiae (strain ATCC 204508 / S288c) (Baker's yeast).